The following is a 107-amino-acid chain: MANFKKVKKGRNLRRKCELCETNIEYVDYKNVEFITKFISGIGQIKPHVSTGTCARHQRKVANAIKRARFMALIPYTKDKIRVLAPAASANTAQAPAEKAKKEAVAA.

It belongs to the bacterial ribosomal protein bS18 family. As to quaternary structure, part of the 30S ribosomal subunit. Forms a tight heterodimer with protein bS6.

In terms of biological role, binds as a heterodimer with protein bS6 to the central domain of the 16S rRNA, where it helps stabilize the platform of the 30S subunit. The polypeptide is Small ribosomal subunit protein bS18 (Mycoplasmopsis agalactiae (strain NCTC 10123 / CIP 59.7 / PG2) (Mycoplasma agalactiae)).